The primary structure comprises 460 residues: Argininosuccinate lyase (460 aa).

It belongs to the lyase 1 family. Argininosuccinate lyase subfamily.

Its subcellular location is the cytoplasm. The catalysed reaction is 2-(N(omega)-L-arginino)succinate = fumarate + L-arginine. It participates in amino-acid biosynthesis; L-arginine biosynthesis; L-arginine from L-ornithine and carbamoyl phosphate: step 3/3. The chain is Argininosuccinate lyase from Streptococcus mutans serotype c (strain ATCC 700610 / UA159).